A 195-amino-acid chain; its full sequence is Der GTPase-activating protein YihI (195 aa).

Residues 1 to 81 form a disordered region; sequence MSRTKKTRRI…KAVVKEVKDP (81 aa). Basic and acidic residues-rich tracts occupy residues 9-23, 38-49, and 66-81; these read RITD…DKPK, TRYELDAQAREE, and DPAE…VKDP.

It belongs to the YihI family. As to quaternary structure, interacts with Der.

Its function is as follows. A GTPase-activating protein (GAP) that modifies Der/EngA GTPase function. May play a role in ribosome biogenesis. The sequence is that of Der GTPase-activating protein YihI from Mannheimia haemolytica (Pasteurella haemolytica).